A 152-amino-acid polypeptide reads, in one-letter code: UPF0266 membrane protein YobD (152 aa).

3 consecutive transmembrane segments (helical) span residues 6 to 26 (LVLILFIAALLAYALYDQFIM), 45 to 65 (VDSVIFVGLVAILIYNNVTSH), and 67 to 87 (AQMTTWLLSALALMGFYIFWI).

The protein belongs to the UPF0266 family.

It is found in the cell inner membrane. The sequence is that of UPF0266 membrane protein YobD from Salmonella agona (strain SL483).